Reading from the N-terminus, the 151-residue chain is uncharacterized protein (151 aa).

The Response regulatory domain occupies 2 to 133 (KTLIVEDNPK…VFVEAVHYSQ (132 aa)). Asp-53 carries the post-translational modification 4-aspartylphosphate.

This is an uncharacterized protein from Sinorhizobium fredii (strain NBRC 101917 / NGR234).